Consider the following 337-residue polypeptide: N-acetyl-gamma-glutamyl-phosphate reductase (337 aa).

Cys-155 is an active-site residue.

Belongs to the NAGSA dehydrogenase family. Type 1 subfamily.

The protein resides in the cytoplasm. The enzyme catalyses N-acetyl-L-glutamate 5-semialdehyde + phosphate + NADP(+) = N-acetyl-L-glutamyl 5-phosphate + NADPH + H(+). The protein operates within amino-acid biosynthesis; L-arginine biosynthesis; N(2)-acetyl-L-ornithine from L-glutamate: step 3/4. In terms of biological role, catalyzes the NADPH-dependent reduction of N-acetyl-5-glutamyl phosphate to yield N-acetyl-L-glutamate 5-semialdehyde. The protein is N-acetyl-gamma-glutamyl-phosphate reductase of Alteromonas mediterranea (strain DSM 17117 / CIP 110805 / LMG 28347 / Deep ecotype).